Reading from the N-terminus, the 204-residue chain is MTEWETATPAVAETPDIKLFGKWSTDDVQINDISLQDYIAVKEKYAKYLPHSAGRYAANGFRKAQCPIVERLTNSMMMHGRNNGKKLMTVRIVKHAFEIIHLLTGENPLQVLVNAIINSGPREDSTRIGRAGTVRRQAVDVSPLRRVNQAIWLLCTGAREAAFRNIKTIAECLADELINARKGSSNSYAIKKKDELERVAKSNR.

N-acetylmethionine is present on M1. T2 is modified (N-acetylthreonine; in 40S ribosomal protein S5, N-terminally processed). T14 is modified (phosphothreonine). K47 bears the N6-acetyllysine; alternate mark. A Glycyl lysine isopeptide (Lys-Gly) (interchain with G-Cter in SUMO2); alternate cross-link involves residue K47. A Phosphoserine modification is found at S142.

It belongs to the universal ribosomal protein uS7 family. As to quaternary structure, component of the small ribosomal subunit. Part of the small subunit (SSU) processome, composed of more than 70 proteins and the RNA chaperone small nucleolar RNA (snoRNA) U3.

It is found in the cytoplasm. It localises to the nucleus. Its subcellular location is the nucleolus. Component of the small ribosomal subunit. The ribosome is a large ribonucleoprotein complex responsible for the synthesis of proteins in the cell. Part of the small subunit (SSU) processome, first precursor of the small eukaryotic ribosomal subunit. During the assembly of the SSU processome in the nucleolus, many ribosome biogenesis factors, an RNA chaperone and ribosomal proteins associate with the nascent pre-rRNA and work in concert to generate RNA folding, modifications, rearrangements and cleavage as well as targeted degradation of pre-ribosomal RNA by the RNA exosome. In Rattus norvegicus (Rat), this protein is Small ribosomal subunit protein uS7 (Rps5).